Here is a 970-residue protein sequence, read N- to C-terminus: Disks large 1 tumor suppressor protein (970 aa).

The 61-residue stretch at 4–64 (KKQEAHRALE…FYELTLLDDS (61 aa)) folds into the L27 domain. Residues 161-209 (TENAKEPTVEQQQKQQQAQQRSSRSPQQQNPQQQQGSKSRSGSQTVNGD) form a disordered region. Residues 171–204 (QQQKQQQAQQRSSRSPQQQNPQQQQGSKSRSGSQ) are compositionally biased toward low complexity. PDZ domains follow at residues 216–303 (DIQL…KRKR) and 330–421 (EIDL…GKTQ). Positions 424-477 (TTSASGGGGGGLSSGQQLSQSQSQLATSQSQSQVHQQQHATPMVNSQSTEPGSR) are disordered. Over residues 437–462 (SGQQLSQSQSQLATSQSQSQVHQQQH) the composition is skewed to low complexity. The segment covering 466-477 (MVNSQSTEPGSR) has biased composition (polar residues). At S496 the chain carries Phosphoserine. A PDZ 3 domain is found at 506-587 (TITIQKGPQG…VVTLLAQYRP (82 aa)). The 71-residue stretch at 620–690 (KRSLYVRALF…PSKRRWERKM (71 aa)) folds into the SH3 domain. T714 bears the Phosphothreonine mark. The 176-residue stretch at 780-955 (TRPVIILGPL…IYSKVKSMIW (176 aa)) folds into the Guanylate kinase-like domain.

It belongs to the MAGUK family. In terms of tissue distribution, during the cellular blastoderm stage, isoform B, isoform F, isoform H, isoform I and isoform L expression is localized to the cell borders. From stage 11 onwards, expression is found predominantly in the developing nervous system: axon bundles in the ventral cord and the brain. Stage 14 and 15 embryos exhibit expression in the developing body wall muscle. Expression in neuropil regions of the CNS and at NMJs persists through to larval development. Other isoforms show expression in embryonic epithelial cells. In larvae, expression is seen as a belt around salivary glands, imaginal disks and proventriculus. Expressed in adult reproductive tissues. In epithelia, coexpressed with scrib throughout development.

It localises to the cytoplasm. Its subcellular location is the cell membrane. The protein resides in the basolateral cell membrane. The protein localises to the cytoskeleton. It is found in the cell junction. It localises to the septate junction. During embryonic development, some isoforms are essential for proper neuronal differentiation and organization. Required for cell polarity; maintenance of apicobasal polarity. Plays a critical role at septate junctions in cellular growth control during larval development. The presence of a guanylate kinase domain suggests involvement in cellular adhesion as well as signal transduction to control cellular proliferation. This chain is Disks large 1 tumor suppressor protein (dlg1), found in Drosophila melanogaster (Fruit fly).